Here is a 593-residue protein sequence, read N- to C-terminus: NADH-quinone oxidoreductase subunit C/D (593 aa).

The NADH dehydrogenase I subunit C stretch occupies residues 1–184 (MTADNAIFIP…DPYSLTLAKQ (184 aa)). The segment at 208 to 593 (DYMFLNLGPN…IDFVMADVDR (386 aa)) is NADH dehydrogenase I subunit D.

This sequence in the N-terminal section; belongs to the complex I 30 kDa subunit family. In the C-terminal section; belongs to the complex I 49 kDa subunit family. NDH-1 is composed of 13 different subunits. Subunits NuoB, CD, E, F, and G constitute the peripheral sector of the complex.

It is found in the cell inner membrane. It catalyses the reaction a quinone + NADH + 5 H(+)(in) = a quinol + NAD(+) + 4 H(+)(out). Functionally, NDH-1 shuttles electrons from NADH, via FMN and iron-sulfur (Fe-S) centers, to quinones in the respiratory chain. The immediate electron acceptor for the enzyme in this species is believed to be ubiquinone. Couples the redox reaction to proton translocation (for every two electrons transferred, four hydrogen ions are translocated across the cytoplasmic membrane), and thus conserves the redox energy in a proton gradient. This is NADH-quinone oxidoreductase subunit C/D from Pseudomonas putida (strain GB-1).